A 336-amino-acid chain; its full sequence is Lipoyl synthase (336 aa).

7 residues coordinate [4Fe-4S] cluster: Cys-81, Cys-86, Cys-92, Cys-107, Cys-111, Cys-114, and Ser-323. The 220-residue stretch at 93–312 (FGHGTATFMI…EDYGYELGFS (220 aa)) folds into the Radical SAM core domain.

It belongs to the radical SAM superfamily. Lipoyl synthase family. It depends on [4Fe-4S] cluster as a cofactor.

The protein resides in the cytoplasm. It catalyses the reaction [[Fe-S] cluster scaffold protein carrying a second [4Fe-4S](2+) cluster] + N(6)-octanoyl-L-lysyl-[protein] + 2 oxidized [2Fe-2S]-[ferredoxin] + 2 S-adenosyl-L-methionine + 4 H(+) = [[Fe-S] cluster scaffold protein] + N(6)-[(R)-dihydrolipoyl]-L-lysyl-[protein] + 4 Fe(3+) + 2 hydrogen sulfide + 2 5'-deoxyadenosine + 2 L-methionine + 2 reduced [2Fe-2S]-[ferredoxin]. Its pathway is protein modification; protein lipoylation via endogenous pathway; protein N(6)-(lipoyl)lysine from octanoyl-[acyl-carrier-protein]: step 2/2. In terms of biological role, catalyzes the radical-mediated insertion of two sulfur atoms into the C-6 and C-8 positions of the octanoyl moiety bound to the lipoyl domains of lipoate-dependent enzymes, thereby converting the octanoylated domains into lipoylated derivatives. This chain is Lipoyl synthase, found in Stenotrophomonas maltophilia (strain K279a).